Reading from the N-terminus, the 297-residue chain is Dehydrodolichyl diphosphate synthase complex subunit Nus1 (297 aa).

2 helical membrane passes run 7 to 26 (LVWR…TSWL) and 40 to 56 (CCRA…GFTL). Residues 63 to 73 (GRNRRHHRHPH) are compositionally biased toward basic residues. The tract at residues 63 to 86 (GRNRRHHRHPHGGPGPGPGPAATH) is disordered. The helical transmembrane segment at 121–139 (IASLVVWCMAVGISYISVY) threads the bilayer. 2 N-linked (GlcNAc...) asparagine glycosylation sites follow: asparagine 148 and asparagine 275. An RXG motif; crucial for prenyltransferase activity motif is present at residues 294–296 (RLG). The isopentenyl diphosphate site is built by leucine 295 and glycine 296.

It belongs to the UPP synthase family. The active dehydrodolichyl diphosphate synthase complex is a heterotetramer composed of a dimer of heterodimer of DHDDS and NUS1. Interacts with NPC2. Mg(2+) is required as a cofactor. As to expression, highly expressed in heart, liver, kidney and pancreas.

It is found in the endoplasmic reticulum membrane. The enzyme catalyses n isopentenyl diphosphate + (2E,6E)-farnesyl diphosphate = a di-trans,poly-cis-polyprenyl diphosphate + n diphosphate. It functions in the pathway protein modification; protein glycosylation. Its pathway is lipid metabolism. Its function is as follows. With DHDDS, forms the dehydrodolichyl diphosphate synthase (DDS) complex, an essential component of the dolichol monophosphate (Dol-P) biosynthetic machinery. Both subunits contribute to enzymatic activity, i.e. condensation of multiple copies of isopentenyl pyrophosphate (IPP) to farnesyl pyrophosphate (FPP) to produce dehydrodolichyl diphosphate (Dedol-PP), a precursor of dolichol phosphate which is utilized as a sugar carrier in protein glycosylation in the endoplasmic reticulum (ER). Synthesizes long-chain polyprenols, mostly of C95 and C100 chain length. Regulates the glycosylation and stability of nascent NPC2, thereby promoting trafficking of LDL-derived cholesterol. Acts as a specific receptor for the N-terminus of Nogo-B, a neural and cardiovascular regulator. This is Dehydrodolichyl diphosphate synthase complex subunit Nus1 from Mus musculus (Mouse).